Consider the following 334-residue polypeptide: Mitochondrial glycine transporter (334 aa).

3 Solcar repeats span residues 22-106 (SKTT…LRQG), 135-219 (LSNW…LKRR), and 237-321 (SSSS…LILR). The next 6 helical transmembrane spans lie at 28–53 (FVAG…TRVQ), 81–107 (GTLP…RQGI), 141–166 (LATG…VRYE), 194–217 (GFGA…EQLK), 241–267 (INFV…KTRL), and 296–314 (GLGL…AWTV).

The protein belongs to the mitochondrial carrier (TC 2.A.29) family. SLC25A38 subfamily.

Its subcellular location is the mitochondrion inner membrane. It catalyses the reaction glycine(in) = glycine(out). Functionally, mitochondrial glycine transporter that imports glycine into the mitochondrial matrix. Plays an important role in providing glycine for the first enzymatic step in heme biosynthesis, the condensation of glycine with succinyl-CoA to produce 5-aminolevulinate (ALA) in the mitochondrial matrix. The chain is Mitochondrial glycine transporter from Aspergillus clavatus (strain ATCC 1007 / CBS 513.65 / DSM 816 / NCTC 3887 / NRRL 1 / QM 1276 / 107).